A 564-amino-acid chain; its full sequence is Probable diguanylate cyclase DgcQ (564 aa).

Helical transmembrane passes span 20–40 (LGPG…STLL) and 360–380 (IALT…WYVI). Residues 428 to 563 (HPFSVIQVDL…GRNRVFASDN (136 aa)) enclose the GGDEF domain. Asp-436 is a binding site for Mg(2+). Substrate contacts are provided by Asn-444, His-449, and Asp-453. Glu-479 is a binding site for Mg(2+). Glu-479 functions as the Proton acceptor in the catalytic mechanism.

Homodimer. The cofactor is Mg(2+).

It is found in the cell inner membrane. The catalysed reaction is 2 GTP = 3',3'-c-di-GMP + 2 diphosphate. It participates in glycan metabolism; bacterial cellulose biosynthesis. The protein operates within purine metabolism; 3',5'-cyclic di-GMP biosynthesis. Its function is as follows. Catalyzes the synthesis of cyclic-di-GMP (c-di-GMP) via the condensation of 2 GTP molecules. Cyclic-di-GMP is a second messenger which controls cell surface-associated traits in bacteria. Involved in the regulation of cellulose production. The polypeptide is Probable diguanylate cyclase DgcQ (Shigella dysenteriae serotype 1 (strain Sd197)).